The chain runs to 166 residues: PTS system glucose-specific EIIA component (166 aa).

Residues Asp-34 to Asn-138 enclose the PTS EIIA type-1 domain. Residues His-71 and His-86 each coordinate Zn(2+). Catalysis depends on His-86, which acts as the Tele-phosphohistidine intermediate; for EIIA activity. Residue His-86 is modified to Phosphohistidine; by HPr.

As to quaternary structure, heterodimer with glycerol kinase (glpk). Zn(2+) serves as cofactor.

Its subcellular location is the cytoplasm. Functionally, the phosphoenolpyruvate-dependent sugar phosphotransferase system (sugar PTS), a major carbohydrate active transport system, catalyzes the phosphorylation of incoming sugar substrates concomitantly with their translocation across the cell membrane. The enzyme II complex composed of PtsG and Crr is involved in glucose transport. The protein is PTS system glucose-specific EIIA component (crr) of Staphylococcus epidermidis (strain ATCC 35984 / DSM 28319 / BCRC 17069 / CCUG 31568 / BM 3577 / RP62A).